A 103-amino-acid polypeptide reads, in one-letter code: Large ribosomal subunit protein bL28 (103 aa).

This sequence belongs to the bacterial ribosomal protein bL28 family.

In Anaplasma marginale (strain St. Maries), this protein is Large ribosomal subunit protein bL28.